Reading from the N-terminus, the 423-residue chain is uncharacterized protein (423 aa).

It belongs to the asfivirus E423R family.

The protein resides in the virion. This is an uncharacterized protein from Ornithodoros (relapsing fever ticks).